Here is a 683-residue protein sequence, read N- to C-terminus: DNA ligase (683 aa).

NAD(+) contacts are provided by residues 35–39, 84–85, and E115; these read DADYD and SL. Residue K117 is the N6-AMP-lysine intermediate of the active site. The NAD(+) site is built by R138, E175, K293, and K317. Zn(2+) is bound by residues C411, C414, C429, and C435. The BRCT domain maps to 598–683; sequence QTNSAVSGKT…LQNISTGAQQ (86 aa).

Belongs to the NAD-dependent DNA ligase family. LigA subfamily. Mg(2+) is required as a cofactor. Requires Mn(2+) as cofactor.

It carries out the reaction NAD(+) + (deoxyribonucleotide)n-3'-hydroxyl + 5'-phospho-(deoxyribonucleotide)m = (deoxyribonucleotide)n+m + AMP + beta-nicotinamide D-nucleotide.. Functionally, DNA ligase that catalyzes the formation of phosphodiester linkages between 5'-phosphoryl and 3'-hydroxyl groups in double-stranded DNA using NAD as a coenzyme and as the energy source for the reaction. It is essential for DNA replication and repair of damaged DNA. In Nitrosomonas eutropha (strain DSM 101675 / C91 / Nm57), this protein is DNA ligase.